The sequence spans 224 residues: Propanediol dehydratase medium subunit (224 aa).

Positions M1–E18 are targets protein to the BMC.

The protein belongs to the diol/glycerol dehydratase medium subunit family. As to quaternary structure, the propanediol dehydratase enzyme is a heterotrimeric complex composed of a large (PduC), a medium (PduD) and a small (PduE) subunit. Requires adenosylcob(III)alamin as cofactor.

It is found in the bacterial microcompartment. The catalysed reaction is propane-1,2-diol = propanal + H2O. It functions in the pathway polyol metabolism; 1,2-propanediol degradation. Part of the PduCDE complex that catalyzes the dehydration of 1,2-propanediol (1,2-PD) to propionaldehyde. This subunit is directly targeted to the bacterial microcompartment (BMC). Functionally, expression of a cosmid containing the full 21-gene pdu operon in E.coli allows E.coli to grow on 1,2-propanediol (1,2-PD) with the appearance of BMCs in its cytoplasm. In terms of biological role, the 1,2-PD-specific bacterial microcompartment (BMC) concentrates low levels of 1,2-PD catabolic enzymes, concentrates volatile reaction intermediates thus enhancing pathway flux and keeps the level of toxic, mutagenic propionaldehyde low. The protein is Propanediol dehydratase medium subunit of Citrobacter freundii.